The sequence spans 145 residues: Alpha-amylase/trypsin inhibitor CMa (145 aa).

The first 25 residues, 1-25 (MASKSSITPLLLAAVLASVFAAATA), serve as a signal peptide directing secretion.

This sequence belongs to the protease inhibitor I6 (cereal trypsin/alpha-amylase inhibitor) family. Heterotetramer of one CMa, one CMb and two CMd chains. Five disulfide bonds, which are essential for the inhibitor activity, are probably present. Endosperm.

Its subcellular location is the secreted. In terms of biological role, alpha-amylase/trypsin inhibitor. It could be involved in insect defense mechanisms. This is Alpha-amylase/trypsin inhibitor CMa (IAT1) from Hordeum vulgare (Barley).